A 315-amino-acid chain; its full sequence is WD repeat domain-containing protein 83 (315 aa).

WD repeat units lie at residues cysteine 23–threonine 62, glycine 65–lysine 104, glycine 107–valine 146, glutamate 151–aspartate 188, valine 190–glutamate 228, glycine 231–alanine 272, and valine 275–glycine 313.

This sequence belongs to the WD repeat MORG1 family. As to quaternary structure, interacts with EGLN3/PHD3. Interacts with ERK signaling proteins MAP2K1/MEK1, MAP2K2/MEK2, LAMTOR3, ARAF/Raf-1, MAPK1/ERK2 and MAPK3/ERK1. Identified in the spliceosome C complex. Interacts with PARD6B and CRB3. Interacts strongly with GTP-bound RRAGA but not with inactive GDP-bound. Interacts with p62/SQSTM1.

The protein resides in the cytoplasm. It localises to the lysosome. The protein localises to the nucleus. Functionally, molecular scaffold protein for various multimeric protein complexes. Acts as a module in the assembly of a multicomponent scaffold for the ERK pathway, linking ERK responses to specific agonists. At low concentrations it enhances ERK activation, whereas high concentrations lead to the inhibition of ERK activation. Also involved in response to hypoxia by acting as a negative regulator of HIF1A/HIF-1-alpha via its interaction with EGLN3/PHD3. May promote degradation of HIF1A. May act by recruiting signaling complexes to a specific upstream activator. May also be involved in pre-mRNA splicing. Participates in tight junction development by regulating apico-basal polarity, a key step in tissue development and organization. Mechanistically, regulates the translocation of PAR6-aPKC from the cytoplasm to the apical surface by acting as an adapter between PARD6B AND CRB3. Also acts as a negative regulator of mTORC1 under nutrient-rich conditions by binding to the active Rag GTPases to inhibit mTORC1 localization to the lysosome and phosphorylation of downstream targets. This facilitates constitutive basal autophagy during nutrient availability. This is WD repeat domain-containing protein 83 (WDR83) from Homo sapiens (Human).